Consider the following 245-residue polypeptide: Ribosomal protein L11 methyltransferase (245 aa).

4 residues coordinate S-adenosyl-L-methionine: Thr101, Gly122, Asp144, and Asn184.

It belongs to the methyltransferase superfamily. PrmA family.

It is found in the cytoplasm. The enzyme catalyses L-lysyl-[protein] + 3 S-adenosyl-L-methionine = N(6),N(6),N(6)-trimethyl-L-lysyl-[protein] + 3 S-adenosyl-L-homocysteine + 3 H(+). In terms of biological role, methylates ribosomal protein L11. This chain is Ribosomal protein L11 methyltransferase, found in Aquifex aeolicus (strain VF5).